Here is a 90-residue protein sequence, read N- to C-terminus: Protein A54 (90 aa).

The polypeptide is Protein A54 (Homo sapiens (Human)).